A 342-amino-acid polypeptide reads, in one-letter code: Trans-3-hydroxy-L-proline dehydratase (342 aa).

Serine 90 serves as the catalytic Proton acceptor. Substrate-binding positions include 91–92, aspartate 252, and 257–258; these read GS and GT.

It belongs to the proline racemase family.

It carries out the reaction trans-3-hydroxy-L-proline = 1-pyrroline-2-carboxylate + H2O. Its function is as follows. Catalyzes the dehydration of trans-3-hydroxy-L-proline (t3LHyp) to Delta(1)-pyrroline-2-carboxylate (Pyr2C). Is likely involved in a degradation pathway that converts t3LHyp to L-proline. Displays neither proline racemase activity nor 4-hydroxyproline 2-epimerase activity. The sequence is that of Trans-3-hydroxy-L-proline dehydratase from Allorhizobium ampelinum (strain ATCC BAA-846 / DSM 112012 / S4) (Agrobacterium vitis (strain S4)).